A 384-amino-acid chain; its full sequence is MSTDYDVVVVGAGIFGSCTAYNCQKIGLKTLLLEQFELGHKNGSSHGKSRITRYAHTEVEYVDLVGDAYNQIFELERIRGEKLWKKTGLLWVSTGNEVEKIHTNLKLKGIKHEVIKGTEVGKRYPQFKFDDSWNGLIDPMGGVIYADKWLNAFRDEFKKIGGIIHDREIVLSHSEISNNLFVTTNKSRYSSKKIIFTVGCWITKFLPDLKFNIEPISISVCYWKTKNESDSHLLNEDHYPVVIAQEMDLQVFHYSLPDTDYPGSMKFCYHFGDALTQDLAHPAQRSQRCIDLPAKFIQKYMPVVDGSAPTRIDKCIYTNSPDDHYIIGTIPTKNPNILVGGCGSGSGFKVAPGIGKALAEMAAGKKTTVDVSFFSANRFKPSKI.

FAD is bound at residue 6–36 (DVVVVGAGIFGSCTAYNCQKIGLKTLLLEQF). Position 315 is an S-8alpha-FAD cysteine (Cys-315).

The protein belongs to the MSOX/MTOX family. FAD is required as a cofactor.

The enzyme catalyses sarcosine + O2 + H2O = formaldehyde + glycine + H2O2. This chain is Putative sarcosine oxidase, found in Caenorhabditis elegans.